The chain runs to 568 residues: Probable WRKY transcription factor 34 (568 aa).

The WRKY 1 DNA-binding region spans 172–236 (ACCAPADDGY…YTGDHIHSKP (65 aa)). The Zn(2+) site is built by cysteine 203, cysteine 208, histidine 231, and histidine 233. 2 disordered regions span residues 230-252 (DHIHSKPPPNRRSGIGSSGTGQD) and 337-360 (KRRKLEAYATETSGSTRASREPRV). Positions 366–431 (SDIDILDDGY…YIGKHTHVVP (66 aa)) form a DNA-binding region, WRKY 2. Positions 397, 402, 426, and 428 each coordinate Zn(2+).

This sequence belongs to the WRKY group I family.

The protein resides in the nucleus. Functionally, transcription factor. Interacts specifically with the W box (5'-(T)TGAC[CT]-3'), a frequently occurring elicitor-responsive cis-acting element. The protein is Probable WRKY transcription factor 34 (WRKY34) of Arabidopsis thaliana (Mouse-ear cress).